Consider the following 448-residue polypeptide: T-box transcription factor T homolog 1 (448 aa).

Residues 54–224 constitute a DNA-binding region (T-box); the sequence is LWDKFNALTN…YNPFAKAFLD (171 aa). Disordered stretches follow at residues 290 to 312 and 401 to 448; these read APYP…TAAS and TTAS…PPSL. The segment covering 417-442 has biased composition (polar residues); it reads STDSGYGHSTTPPAPQTRITSNNWSP.

The protein localises to the nucleus. Functionally, involved in the transcriptional regulation of genes required for mesoderm formation and differentiation. This is T-box transcription factor T homolog 1 from Branchiostoma floridae (Florida lancelet).